We begin with the raw amino-acid sequence, 262 residues long: Ninja-family protein 3 (262 aa).

A disordered region spans residues 48-69 (RRNSLTCNTSKEAAGQSPEEMN).

This sequence belongs to the Ninja family.

It is found in the nucleus. This chain is Ninja-family protein 3, found in Zea mays (Maize).